The chain runs to 516 residues: Cytochrome P450 1A2 (516 aa).

Residue Ser69 is glycosylated (O-linked (GlcNAc) serine). Phe226 is a substrate binding site. Cys458 serves as a coordination point for heme.

Belongs to the cytochrome P450 family. Interacts with PGRMC1; the interaction requires PGRMC1 homodimerization. It depends on heme as a cofactor. Liver.

Its subcellular location is the endoplasmic reticulum membrane. It is found in the microsome membrane. The catalysed reaction is an organic molecule + reduced [NADPH--hemoprotein reductase] + O2 = an alcohol + oxidized [NADPH--hemoprotein reductase] + H2O + H(+). It catalyses the reaction 17beta-estradiol + reduced [NADPH--hemoprotein reductase] + O2 = 2-hydroxy-17beta-estradiol + oxidized [NADPH--hemoprotein reductase] + H2O + H(+). The enzyme catalyses 17beta-estradiol + reduced [NADPH--hemoprotein reductase] + O2 = 4-hydroxy-17beta-estradiol + oxidized [NADPH--hemoprotein reductase] + H2O + H(+). It carries out the reaction estrone + reduced [NADPH--hemoprotein reductase] + O2 = 2-hydroxyestrone + oxidized [NADPH--hemoprotein reductase] + H2O + H(+). The catalysed reaction is estrone + reduced [NADPH--hemoprotein reductase] + O2 = 4-hydroxyestrone + oxidized [NADPH--hemoprotein reductase] + H2O + H(+). It catalyses the reaction cholesterol + reduced [NADPH--hemoprotein reductase] + O2 = 25-hydroxycholesterol + oxidized [NADPH--hemoprotein reductase] + H2O + H(+). The enzyme catalyses all-trans-retinol + reduced [NADPH--hemoprotein reductase] + O2 = all-trans-retinal + oxidized [NADPH--hemoprotein reductase] + 2 H2O + H(+). It carries out the reaction all-trans-retinal + reduced [NADPH--hemoprotein reductase] + O2 = all-trans-retinoate + oxidized [NADPH--hemoprotein reductase] + H2O + 2 H(+). The catalysed reaction is (5Z,8Z,11Z,14Z)-eicosatetraenoate + reduced [NADPH--hemoprotein reductase] + O2 = (14R,15S)-epoxy-(5Z,8Z,11Z)-eicosatrienoate + oxidized [NADPH--hemoprotein reductase] + H2O + H(+). It catalyses the reaction (5Z,8Z,11Z,14Z)-eicosatetraenoate + reduced [NADPH--hemoprotein reductase] + O2 = (14S,15R)-epoxy-(5Z,8Z,11Z)-eicosatrienoate + oxidized [NADPH--hemoprotein reductase] + H2O + H(+). The enzyme catalyses (5Z,8Z,11Z,14Z,17Z)-eicosapentaenoate + reduced [NADPH--hemoprotein reductase] + O2 = (17R,18S)-epoxy-(5Z,8Z,11Z,14Z)-eicosatetraenoate + oxidized [NADPH--hemoprotein reductase] + H2O + H(+). It carries out the reaction (4Z,7Z,10Z,13Z,16Z,19Z)-docosahexaenoate + reduced [NADPH--hemoprotein reductase] + O2 = (19R,20S)-epoxy-(4Z,7Z,10Z,13Z,16Z)-docosapentaenoate + oxidized [NADPH--hemoprotein reductase] + H2O + H(+). The catalysed reaction is (5S)-hydroperoxy-(6E,8Z,11Z,14Z)-eicosatetraenoate = 5-oxo-(6E,8Z,11Z,14Z)-eicosatetraenoate + H2O. It catalyses the reaction (12S)-hydroperoxy-(5Z,8Z,10E,14Z)-eicosatetraenoate = 12-oxo-(5Z,8Z,10E,14Z)-eicosatetraenoate + H2O. The enzyme catalyses (15S)-hydroperoxy-(5Z,8Z,11Z,13E)-eicosatetraenoate = 15-oxo-(5Z,8Z,11Z,13E)-eicosatetraenoate + H2O. It carries out the reaction (13S)-hydroperoxy-(9Z,11E)-octadecadienoate = 13-oxo-(9Z,11E)-octadecadienoate + H2O. The catalysed reaction is (5Z,8Z,11Z,14Z)-eicosatetraenoate + reduced [NADPH--hemoprotein reductase] + O2 = 13-hydroxy-(5Z,8Z,11Z,14Z)-eicosatetraenoate + oxidized [NADPH--hemoprotein reductase] + H2O + H(+). It catalyses the reaction (5Z,8Z,11Z,14Z)-eicosatetraenoate + reduced [NADPH--hemoprotein reductase] + O2 = 19-hydroxy-(5Z,8Z,11Z,14Z)-eicosatetraenoate + oxidized [NADPH--hemoprotein reductase] + H2O + H(+). The enzyme catalyses (9Z,12Z)-octadecadienoate + reduced [NADPH--hemoprotein reductase] + O2 = 11-hydroxy-(9Z,12Z)-octadecadienoate + oxidized [NADPH--hemoprotein reductase] + H2O + H(+). Its pathway is cofactor metabolism; retinol metabolism. It functions in the pathway steroid metabolism; cholesterol metabolism. It participates in lipid metabolism; arachidonate metabolism. In terms of biological role, a cytochrome P450 monooxygenase involved in the metabolism of various endogenous substrates, including fatty acids, steroid hormones and vitamins. Mechanistically, uses molecular oxygen inserting one oxygen atom into a substrate, and reducing the second into a water molecule, with two electrons provided by NADPH via cytochrome P450 reductase (NADPH--hemoprotein reductase). Catalyzes the hydroxylation of carbon-hydrogen bonds. Exhibits high catalytic activity for the formation of hydroxyestrogens from estrone (E1) and 17beta-estradiol (E2), namely 2-hydroxy E1 and E2. Metabolizes cholesterol toward 25-hydroxycholesterol, a physiological regulator of cellular cholesterol homeostasis. May act as a major enzyme for all-trans retinoic acid biosynthesis in the liver. Catalyzes two successive oxidative transformation of all-trans retinol to all-trans retinal and then to the active form all-trans retinoic acid. Primarily catalyzes stereoselective epoxidation of the last double bond of polyunsaturated fatty acids (PUFA), displaying a strong preference for the (R,S) stereoisomer. Catalyzes bisallylic hydroxylation and omega-1 hydroxylation of PUFA. May also participate in eicosanoids metabolism by converting hydroperoxide species into oxo metabolites (lipoxygenase-like reaction, NADPH-independent). Plays a role in the oxidative metabolism of xenobiotics. Catalyzes the N-hydroxylation of heterocyclic amines and the O-deethylation of phenacetin. Metabolizes caffeine via N3-demethylation. The polypeptide is Cytochrome P450 1A2 (Homo sapiens (Human)).